The primary structure comprises 213 residues: Protein DMP3 (213 aa).

A disordered region spans residues 1–27; sequence MSSPSSLTQRNPTSSQEQSESVPQLRR. 4 helical membrane-spanning segments follow: residues 45-65, 74-94, 136-156, and 176-196; these read LANLLPTGTLLAFTLLIPVFT, TQVLTIVLLTLLSISCFLSSF, IRIIDWIHAVLSVLVFGAVAL, and VLDIVPMGVGVICGMLFLVFP.

The protein belongs to the plant DMP1 protein family. In terms of tissue distribution, expressed in leaves, siliques and roots (e.g. root hairs).

Its subcellular location is the endoplasmic reticulum membrane. In terms of biological role, involved in membrane remodeling. In Arabidopsis thaliana (Mouse-ear cress), this protein is Protein DMP3.